The sequence spans 1139 residues: Hapless 2 (1139 aa).

The N-terminal stretch at Met-1–Ala-22 is a signal peptide. The Extracellular segment spans residues Glu-23–Arg-630. Intrachain disulfides connect Cys-33/Cys-44, Cys-136/Cys-164, Cys-147/Cys-210, Cys-165/Cys-383, Cys-167/Cys-190, Cys-366/Cys-390, and Cys-475/Cys-482. Positions Ala-241–Pro-272 are enriched in low complexity. The disordered stretch occupies residues Ala-241–Arg-283. Asn-497 carries N-linked (GlcNAc...) asparagine glycosylation. A disulfide bridge connects residues Cys-515 and Cys-556. The O-linked (GlcNAc...) threonine glycan is linked to Thr-577. A helical transmembrane segment spans residues Leu-631 to Phe-651. At Gly-652–Lys-1139 the chain is on the cytoplasmic side. 2 disordered regions span residues Gly-689–Ala-719 and His-741–Lys-1139. Basic and acidic residues predominate over residues Gln-753–Ala-767. Over residues Gly-770 to Ser-789 the composition is skewed to low complexity. Positions Trp-829–Gly-851 are enriched in basic and acidic residues. A compositionally biased stretch (gly residues) spans Tyr-868–Gly-884. The segment covering Ala-887 to Pro-904 has biased composition (pro residues). Gly residues-rich tracts occupy residues Pro-919 to Gln-943 and Arg-955 to Gly-965. Over residues Gly-978 to Gln-991 the composition is skewed to pro residues. Positions Gly-1018–Gly-1029 are enriched in basic and acidic residues. A compositionally biased stretch (gly residues) spans Gly-1040 to Gly-1049. Pro residues predominate over residues Ile-1054–Tyr-1067. 2 stretches are compositionally biased toward gly residues: residues Gly-1078–Gly-1096 and Gly-1106–Arg-1118.

The protein belongs to the HAP2/GCS1 family. As to quaternary structure, monomer. Homotrimer. Membrane contact and insertion (via its extracellular domain) into a lipid membrane probably triggers trimerization. In terms of processing, the protein present at the cell membrane is rapidly degraded after fusion between male (minus) and female (plus) gametes, contrary to the protein present in intracellular pools. This may represent a mechanism to avoid fusion of several male gametes with a single female gamete. Post-translationally, N-glycosylated.

It localises to the cell membrane. The protein localises to the cell projection. Its subcellular location is the cytoplasmic vesicle membrane. In terms of biological role, during fertilization, required on male (minus) gametes for their fusion with female (plus) gametes. Required for membrane fusion, but not for the initial adhesion between gametes. Inserts (via its extracellular domain) into lipid membranes (in vitro). Probably initiates the fusion of gamete cell membranes by inserting its extracellular domain into the cell membrane of a female gamete. The polypeptide is Hapless 2 (Chlamydomonas reinhardtii (Chlamydomonas smithii)).